Reading from the N-terminus, the 984-residue chain is MSGQVPRVPEEMFKEVKYYAVGDLDPQVIQLLKAGKAKEVSYNALASHIISEDGDNPEVGEAREVFDLPVVKPSWVILSVQCGALLPVNGFSPESCQIFFGITACLSQVSPEDRSALWAMLTFHGGGCQLNLNRKCTHLVVPEPKGEKYECALRRASIKIVTPDWVLDCISEKTRKDEALYHPRLIVYEEEEEEEEEEEGAGNEEPDSPNEGSTDGKSSPASSQEGSPSGEPPFSPKSSAEKSKGELMFDDSSDSSPEKQERNLNWTPAEVPQLAAAKRRLPPGKEPGLINLCANVPPVPGGILPPEVRGSLLAPGQSLQGPERPEVMAAWSPAMRTLRNITNNADIQQMSSRPSNVAHILQSLSAPTKTLEQQVNHSQQGPASAVLLGQVKVAPEPAPAPQPILHLQPQQLLQLQQQHLAQQPYPPPPPHPFPPPPAHPHQFPQPPLQRPQPPLQQQQLSHLQQQQLQHLQRLQQMQPTPTAQLPGPPAQALQPPPPQAQAQPPLFGHDPAVEIPEEGFLLGCVFAIADYPEQMSDKQLLATWKRIIQAHGGAVDPTFSSRCTHLLCESQVSGLFAQAMKERKRCITAHWLNTVLKKKKLVPPHRALHFPVAFPPGGKPCSQHIISVTGFVDNDRDDLKLMAYLAGAKYTGYLCRSNTVLICREPTGLKYEKAKEWRIPCVNAQWLGDILLGNFEALRQTQYGRYTAFGLQDPFAPTPQLVLSLLDAWRVPLKVSSELLMGVRLPPKPKQNEVTNVQPSSKRARIEDIPPPTKKLTPELTPFVLFTGFEPVQVQQYIKKLYILGGEVAESAQKCTHLIASKVTRTVKFLTAISVVKHIVTPEWLEECFKCQKFVDEQNYLLRDAEAEVLFSFSLEESLRRAHASPLFKAKYFYITPGICPSLSTMKAIVECAGGKVLSRQPSFRKLMEHKQNKSLSEIVLISCENDLHLCREYFARGIDVHNAEFVLTGVLTQTLDYESYKFN.

2 BRCT domains span residues 8–93 (VPEE…GFSP) and 94–183 (ESCQ…LYHP). The interval 94–183 (ESCQIFFGIT…TRKDEALYHP (90 aa)) is interaction with PAGR1. 2 disordered regions span residues 187–271 (VYEE…PAEV) and 417–509 (QQHL…LFGH). A compositionally biased stretch (acidic residues) spans 188–208 (YEEEEEEEEEEEGAGNEEPDS). Residues 217-229 (KSSPASSQEGSPS) are compositionally biased toward low complexity. A phosphoserine mark is found at serine 227 and serine 235. The segment covering 424–454 (PYPPPPPHPFPPPPAHPHQFPQPPLQRPQPP) has biased composition (pro residues). Residues 455-485 (LQQQQLSHLQQQQLQHLQRLQQMQPTPTAQL) are compositionally biased toward low complexity. Pro residues predominate over residues 486-499 (PGPPAQALQPPPPQ). The tract at residues 505 to 984 (PLFGHDPAVE…TLDYESYKFN (480 aa)) is interaction with TP53BP1. BRCT domains follow at residues 516-609 (PEEG…RALH) and 616-704 (PGGK…TQYG). Residues 583–600 (RKRCITAHWLNTVLKKKK) carry the Nuclear localization signal motif. A disordered region spans residues 750–771 (KQNEVTNVQPSSKRARIEDIPP). The segment covering 752–761 (NEVTNVQPSS) has biased composition (polar residues). 2 BRCT domains span residues 781 to 862 (TPFV…NYLL) and 883 to 924 (HASP…QPSF).

In terms of assembly, interacts with the C-terminal transactivation domain of PAX2. Forms a constitutive complex with PAGR1 independently of the MLL2/MLL3 complex. Interacts with TP53BP1 (when phosphorylated at the N-terminus by ATM). Interacts with HLTF. Component of the KMT2 family MLL2/MLL3 complex (also named ASCOM complex), at least composed of the HMTs KMT2D and/or KMT2C, the common subunits ASH2L, RBBP5, WDR5 and DPY30, and the complex type-specific subunits PAXIP1/PTIP, PAGR1, NCOA6 and KDM6A; required for the association of PAGR1 with the MLL2/MLL3 complex. Interacts with NUPR1; this interaction prevents PAXIP1 inhibition of PAX2 transcription factor activity.

Its subcellular location is the nucleus matrix. It localises to the chromosome. Involved in DNA damage response and in transcriptional regulation through histone methyltransferase (HMT) complexes. Plays a role in early development. In DNA damage response is required for cell survival after ionizing radiation. In vitro shown to be involved in the homologous recombination mechanism for the repair of double-strand breaks (DSBs). Its localization to DNA damage foci requires RNF8 and UBE2N. Recruits TP53BP1 to DNA damage foci and, at least in particular repair processes, effective DNA damage response appears to require the association with TP53BP1 phosphorylated by ATM at 'Ser-25'. Together with TP53BP1 regulates ATM association. Proposed to recruit PAGR1 to sites of DNA damage and the PAGR1:PAXIP1 complex is required for cell survival in response to DNA damage; the function is probably independent of MLL-containing histone methyltransferase (HMT) complexes. However, this function has been questioned. Promotes ubiquitination of PCNA following UV irradiation and may regulate recruitment of polymerase eta and RAD51 to chromatin after DNA damage. Proposed to be involved in transcriptional regulation by linking MLL-containing histone methyltransferase (HMT) complexes to gene promoters by interacting with promoter-bound transcription factors such as PAX2. Associates with gene promoters that are known to be regulated by KMT2D/MLL2. During immunoglobulin class switching in activated B-cells is involved in trimethylation of histone H3 at 'Lys-4' and in transcription initiation of downstream switch regions at the immunoglobulin heavy-chain (Igh) locus; this function appears to involve the recruitment of MLL-containing HMT complexes. Conflictingly, its function in transcriptional regulation during immunoglobulin class switching is reported to be independent of the MLL2/MLL3 complex. This Bos taurus (Bovine) protein is PAX-interacting protein 1 (PAXIP1).